Reading from the N-terminus, the 185-residue chain is Small ribosomal subunit protein bS16 (185 aa).

The tract at residues 83 to 185 (QWTHGNNPEK…APASEETTEG (103 aa)) is disordered. A compositionally biased stretch (basic and acidic residues) spans 89–125 (NPEKAKPGKKAQERDAERTQRDADRVAAEAQAKEDAK). Composition is skewed to low complexity over residues 126–146 (AAAA…AAAP) and 159–176 (VEAA…AEEA).

It belongs to the bacterial ribosomal protein bS16 family.

The protein is Small ribosomal subunit protein bS16 of Caulobacter sp. (strain K31).